The sequence spans 204 residues: Large ribosomal subunit protein uL22m (204 aa).

Residues Met1 to Glu38 constitute a mitochondrion transit peptide.

It belongs to the universal ribosomal protein uL22 family. As to quaternary structure, component of the mitochondrial ribosome large subunit (39S) which comprises a 16S rRNA and about 50 distinct proteins.

Its subcellular location is the mitochondrion. This chain is Large ribosomal subunit protein uL22m (MRPL22), found in Bos taurus (Bovine).